Consider the following 55-residue polypeptide: uncharacterized protein (55 aa).

This is an uncharacterized protein from Homo sapiens (Human).